The chain runs to 249 residues: MRKPVMAGNWKMYKTPAETIAFFEKFRPLVEKSSHCEIVICPPFTNLAAAVDAVRGTSIRVGAQNVGWAKEGAFTGEVSGPMLNAMGVSHVIIGHSERRQYFNETDETVLKRTQAALEFGLTPIVCVGELLADREGGRTEAVLAGQFQKGIAGLTEQQFAKIVIAYEPVWAIGTGKTATPEIAADTHRAIRGQVREKFGKEAADAVRILYGGSVKPDNAKVLMGQPEIDGVLVGGAALDPVSFASIVNF.

Substrate is bound at residue 9-11; it reads NWK. The active-site Electrophile is the His-95. Glu-167 serves as the catalytic Proton acceptor. Substrate is bound by residues Gly-173, Ser-213, and 234-235; that span reads GG.

It belongs to the triosephosphate isomerase family. Homodimer.

It is found in the cytoplasm. It carries out the reaction D-glyceraldehyde 3-phosphate = dihydroxyacetone phosphate. It functions in the pathway carbohydrate biosynthesis; gluconeogenesis. The protein operates within carbohydrate degradation; glycolysis; D-glyceraldehyde 3-phosphate from glycerone phosphate: step 1/1. Functionally, involved in the gluconeogenesis. Catalyzes stereospecifically the conversion of dihydroxyacetone phosphate (DHAP) to D-glyceraldehyde-3-phosphate (G3P). This Solibacter usitatus (strain Ellin6076) protein is Triosephosphate isomerase.